The primary structure comprises 1129 residues: Protein TPR1 (1129 aa).

The LisH domain maps to 4–36; that stretch reads LSRELVFLILQFLDEEKFKETVHKLEQESGFFF. Residues 34-92 form the CTLH domain; sequence FFFNMKYFEEKVHAGEWDEVEKYLSGFTKVDDNRYSMKIFFEIRKQKYLEALDRHDRAK. WD repeat units lie at residues 337 to 377, 398 to 437, 443 to 485, 487 to 527, 579 to 618, 623 to 662, 762 to 801, 829 to 867, 870 to 910, 913 to 952, and 1005 to 1044; these read SQGS…RLFS, ESSISINRVTWSPDGDLIGVAFAKHLIHLHAYQQPNETRQ, AHSG…FSFE, HEAP…SRVD, KKSAGVGVVQFDTAQNHILAAGEDNQIKFWDVDNTTMLSS, GGLPGLPRLRFNKEGNLLAVTTVDNGFKILANADGLRTLR, DQASKVVRLLYTNSGVGLLALGSNAIQRLWKWARNDQNPS, NPEDAVPCIALSKNDSYVMSACGGKVSLFNMMTFKVMTT, PPPP…VKTR, GHQRRITGLAFSNNLQILVSSGADAQLCVWATDTWEKKKS, and ALSAPISHASYSRNSQLVFAAFTDGNIGIFDVENLRLRCR. Positions 1092–1129 are disordered; that stretch reads LESEGKWGTTPPTENGVPNGRTSTSSATSNPAADQIQR. Low complexity predominate over residues 1113–1129; it reads TSTSSATSNPAADQIQR.

In terms of assembly, tetramer. Interacts with D53. Interacts with WOX1. Interacts with MOF1. Expressed in panicles, stems, leaves, spikelets and seed endosperm.

Probable downstream regulator of strigolactones signaling. The polypeptide is Protein TPR1 (Oryza sativa subsp. japonica (Rice)).